Consider the following 703-residue polypeptide: Bifunctional arginine dihydrolase/ornithine cyclodeaminase AgrE (703 aa).

The segment at 10-269 (CPPDHYDVDY…GAAKCLTLRV (260 aa)) is arginine dihydrolase. L-arginine contacts are provided by N22, D65, N71, R90, and R139. N22 contributes to the L-ornithine binding site. The L-ornithine site is built by R90, R139, and H168. H168 (proton donor/acceptor) is an active-site residue. Residues D170 and A258 each contribute to the L-arginine site. C264 lines the L-ornithine pocket. C264 serves as the catalytic Nucleophile. Residues 285 to 694 (SRIIRIEGHL…SLLTQQLDKL (410 aa)) form an ornithine cyclodeaminase region. NAD(+) contacts are provided by N524, A525, D603, S635, M636, L637, H638, D656, D679, and V680.

It in the N-terminal section; belongs to the DDAH family. The protein in the C-terminal section; belongs to the AgrE/ArgZ ornithine cyclodeaminase family. In terms of assembly, homotetramer. The cofactor is NAD(+).

It carries out the reaction L-arginine + 2 H2O + 2 H(+) = L-ornithine + 2 NH4(+) + CO2. The enzyme catalyses L-ornithine = L-proline + NH4(+). Ornithine cyclodeaminase activity is inhibited by ATP. In terms of biological role, bifunctional enzyme involved in a cyanobacterial arginine utilization pathway that produces glutamate and enables cellular adaptation to nitrogen fluctuations. Catalyzes the hydrolysis of arginine to ornithine, with the release of ammonia and carbon dioxide. Then, catalyzes the conversion of ornithine to proline, with the release of ammonia. This Nostoc sp. (strain PCC 7120 / SAG 25.82 / UTEX 2576) protein is Bifunctional arginine dihydrolase/ornithine cyclodeaminase AgrE.